The chain runs to 544 residues: Protein adenylyltransferase (544 aa).

One can recognise a Fido domain in the interval 63 to 216; the sequence is FDTAYLCHIH…LEPMQHLFED (154 aa). Residues 93–94, 106–107, 163–167, and R170 each bind ATP; these read FA, RT, and EGNGR.

Its subcellular location is the secreted. The catalysed reaction is L-tyrosyl-[protein] + ATP = O-(5'-adenylyl)-L-tyrosyl-[protein] + diphosphate. The enzyme catalyses L-threonyl-[protein] + ATP = 3-O-(5'-adenylyl)-L-threonyl-[protein] + diphosphate. In terms of biological role, adenylyltransferase involved in virulence by mediating the addition of adenosine 5'-monophosphate (AMP) to specific residue of host target proteins. This is Protein adenylyltransferase (bepA) from Bartonella henselae (strain ATCC 49882 / DSM 28221 / CCUG 30454 / Houston 1) (Rochalimaea henselae).